The primary structure comprises 332 residues: Ribosomal RNA small subunit methyltransferase C (332 aa).

This sequence belongs to the methyltransferase superfamily. RsmC family. As to quaternary structure, monomer.

It is found in the cytoplasm. The enzyme catalyses guanosine(1207) in 16S rRNA + S-adenosyl-L-methionine = N(2)-methylguanosine(1207) in 16S rRNA + S-adenosyl-L-homocysteine + H(+). Specifically methylates the guanine in position 1207 of 16S rRNA in the 30S particle. This Pseudomonas entomophila (strain L48) protein is Ribosomal RNA small subunit methyltransferase C.